Reading from the N-terminus, the 87-residue chain is DNA-directed RNA polymerase subunit Rpo5 (87 aa).

This sequence belongs to the archaeal Rpo5/eukaryotic RPB5 RNA polymerase subunit family. As to quaternary structure, part of the RNA polymerase complex.

The protein localises to the cytoplasm. The enzyme catalyses RNA(n) + a ribonucleoside 5'-triphosphate = RNA(n+1) + diphosphate. In terms of biological role, DNA-dependent RNA polymerase (RNAP) catalyzes the transcription of DNA into RNA using the four ribonucleoside triphosphates as substrates. This chain is DNA-directed RNA polymerase subunit Rpo5, found in Thermoplasma acidophilum (strain ATCC 25905 / DSM 1728 / JCM 9062 / NBRC 15155 / AMRC-C165).